The chain runs to 277 residues: Large ribosomal subunit protein uL2 (277 aa).

Residues 223 to 277 are disordered; the sequence is VTMNPVDHPHGGGEGRTSGGRHPVTPWGKPTKGMKTRSNKATDKFIVTSRHKRKK.

It belongs to the universal ribosomal protein uL2 family. As to quaternary structure, part of the 50S ribosomal subunit. Forms a bridge to the 30S subunit in the 70S ribosome.

Its function is as follows. One of the primary rRNA binding proteins. Required for association of the 30S and 50S subunits to form the 70S ribosome, for tRNA binding and peptide bond formation. It has been suggested to have peptidyltransferase activity; this is somewhat controversial. Makes several contacts with the 16S rRNA in the 70S ribosome. The polypeptide is Large ribosomal subunit protein uL2 (Azorhizobium caulinodans (strain ATCC 43989 / DSM 5975 / JCM 20966 / LMG 6465 / NBRC 14845 / NCIMB 13405 / ORS 571)).